Reading from the N-terminus, the 1001-residue chain is 26S proteasome non-ATPase regulatory subunit 1 homolog B (1001 aa).

Ala-2 bears the N-acetylalanine mark. Lys-166 participates in a covalent cross-link: Glycyl lysine isopeptide (Lys-Gly) (interchain with G-Cter in ubiquitin). PC repeat units lie at residues Ser-412 to Pro-447, Gly-452 to Gln-485, Gly-487 to Glu-521, Ala-522 to Ile-555, Gly-557 to Tyr-590, Gly-591 to Arg-626, Thr-627 to Arg-659, Gly-661 to Gln-695, Gly-696 to Ser-736, and Gly-739 to Ile-771. 2 disordered regions span residues Ala-853 to Lys-896 and Ser-954 to Pro-1001. The segment covering Lys-854–Ala-863 has biased composition (basic and acidic residues). The residue at position 889 (Ser-889) is a Phosphoserine. Residues Ser-961–Ala-985 are compositionally biased toward low complexity.

This sequence belongs to the proteasome subunit S1 family. As to quaternary structure, component of the 19S regulatory particle (RP/PA700) base subcomplex of the 26S proteasome. The 26S proteasome is composed of a core protease (CP), known as the 20S proteasome, capped at one or both ends by the 19S regulatory particle (RP/PA700). The RP/PA700 complex is composed of at least 17 different subunits in two subcomplexes, the base and the lid, which form the portions proximal and distal to the 20S proteolytic core, respectively.

Its function is as follows. Acts as a regulatory subunit of the 26 proteasome which is involved in the ATP-dependent degradation of ubiquitinated proteins. The sequence is that of 26S proteasome non-ATPase regulatory subunit 1 homolog B (RPN2B) from Arabidopsis thaliana (Mouse-ear cress).